An 80-amino-acid polypeptide reads, in one-letter code: DNA-directed RNA polymerase RPB10 homolog (80 aa).

Positions 7, 10, 65, and 66 each coordinate Zn(2+).

Belongs to the archaeal RpoN/eukaryotic RPB10 RNA polymerase subunit family. As to quaternary structure, part of the viral DNA-directed RNA polymerase that consists of 8 polII-like subunits (RPB1, RPB2, RPB3, RPB5, RPB6, RPB7, RPB9, RPB10), a capping enzyme and a termination factor.

It localises to the host cytoplasm. In terms of biological role, component of the DNA-directed RNA polymerase (RNAP) that catalyzes the transcription in the cytoplasm of viral DNA into RNA using the four ribonucleoside triphosphates as substrates. The sequence is that of DNA-directed RNA polymerase RPB10 homolog from African swine fever virus (strain Badajoz 1971 Vero-adapted) (Ba71V).